A 306-amino-acid chain; its full sequence is MGSGGGGCGRNGAVRQYIRSKVPRLRWTGELHCSFVQAIEFLGGQDKATPKLILQLMGVKGLTISHVKSHLQMYRCSRLGSHGTGRRSEMQPQLQRKHSCGADEQVPREFLCPPLKRTRMGTEATYKGMQGSQGISEMRTTGTQYCIDDYMQAMAMERRIKEEGLRWQRDAAAAAAADGGAAASNLQTVGCSVQESDPFKIIKPEVHHLGPVLKLQCSKVENSGFISSSTGTAARDQPEPPPLEKCSLSLSLGPDPKCMPAIASSPSESSCILSSSSRSFSDCSGNSGCLVAPGVNLELSMSICGS.

Residues 19–79 (RSKVPRLRWT…HLQMYRCSRL (61 aa)) form the HTH myb-type domain. The segment at residues 50–75 (PKLILQLMGVKGLTISHVKSHLQMYR) is a DNA-binding region (H-T-H motif).

In terms of assembly, interacts with TPR1, TPR2 and TPR3. Expressed in roots, leaves, leaf sheaths, culms, panicles, lemmas, paleas, lodicules, stamens, and pistils.

It is found in the nucleus. Transcriptional repressor that plays a role in the regulation of organ identity and spikelet meristem determinacy. Interacts with the TPR corepressors to possibly repress the expression of downstream target genes. The polypeptide is Myb family transcription factor MOF1 (Oryza sativa subsp. japonica (Rice)).